We begin with the raw amino-acid sequence, 502 residues long: Lysine--tRNA ligase (502 aa).

Residues glutamate 403 and glutamate 410 each coordinate Mg(2+).

It belongs to the class-II aminoacyl-tRNA synthetase family. As to quaternary structure, homodimer. Mg(2+) is required as a cofactor.

The protein resides in the cytoplasm. The catalysed reaction is tRNA(Lys) + L-lysine + ATP = L-lysyl-tRNA(Lys) + AMP + diphosphate. This Parasynechococcus marenigrum (strain WH8102) protein is Lysine--tRNA ligase.